The chain runs to 143 residues: Endoribonuclease YbeY (143 aa).

Zn(2+) contacts are provided by His113, His117, and Asp123.

This sequence belongs to the endoribonuclease YbeY family. Requires Zn(2+) as cofactor.

Its subcellular location is the cytoplasm. In terms of biological role, single strand-specific metallo-endoribonuclease involved in late-stage 70S ribosome quality control and in maturation of the 3' terminus of the 16S rRNA. This is Endoribonuclease YbeY from Elusimicrobium minutum (strain Pei191).